A 279-amino-acid polypeptide reads, in one-letter code: NAD kinase (279 aa).

The active-site Proton acceptor is aspartate 57. NAD(+) contacts are provided by residues 57 to 58, 133 to 134, arginine 159, aspartate 161, and 172 to 177; these read DG, NE, and TAYNKS.

The protein belongs to the NAD kinase family. A divalent metal cation serves as cofactor.

Its subcellular location is the cytoplasm. The enzyme catalyses NAD(+) + ATP = ADP + NADP(+) + H(+). Functionally, involved in the regulation of the intracellular balance of NAD and NADP, and is a key enzyme in the biosynthesis of NADP. Catalyzes specifically the phosphorylation on 2'-hydroxyl of the adenosine moiety of NAD to yield NADP. This is NAD kinase from Streptococcus pyogenes serotype M12 (strain MGAS2096).